A 124-amino-acid chain; its full sequence is Transcription initiation factor TFIID subunit 13 (124 aa).

Residues 1–16 are compositionally biased toward acidic residues; it reads MADEEEDPTFEEENEE. The segment at 1-28 is disordered; sequence MADEEEDPTFEEENEEIGGGAEGGQGKR. Residues 32-74 enclose the Histone-fold domain; that stretch reads FSKELRCMMYGFGDDQNPYTESVDILEDLVIEFITEMTHKAMS.

Belongs to the TAF13 family. In terms of assembly, component of the TFIID basal transcription factor complex, composed of TATA-box-binding protein TBP, and a number of TBP-associated factors (TAFs), including TAF1, TAF2, TAF3, TAF4, TAF5, TAF6, TAF7, TAF8, TAF9, TAF10, TAF11, TAF12 and TAF13. Interacts with TBP, and more strongly with TAF10 and TAF11.

The protein localises to the nucleus. Functionally, the TFIID basal transcription factor complex plays a major role in the initiation of RNA polymerase II (Pol II)-dependent transcription. TFIID recognizes and binds promoters via its subunit TBP, a TATA-box-binding protein, and promotes assembly of the pre-initiation complex (PIC). The TFIID complex consists of TBP and TBP-associated factors (TAFs), including TAF1, TAF2, TAF3, TAF4, TAF5, TAF6, TAF7, TAF8, TAF9, TAF10, TAF11, TAF12 and TAF13. TAF13, together with TAF11 and TBP, play key roles during promoter binding by the TFIID and TFIIA transcription factor complexes. The sequence is that of Transcription initiation factor TFIID subunit 13 from Bos taurus (Bovine).